The sequence spans 137 residues: MPTINQLVRKPRKSKTKQSDSPALNRGFNSKKKQFTNLNSPQKRGVCTRVGTMTPKKPNSALRKYARVRLSNNIEVNAYIPGIGHNLQEHSVVLVRGGRVKDLPGVRYHIVRGALDTSGVDGRRQGRSLYGTKKPKN.

Residues 1 to 55 form a disordered region; that stretch reads MPTINQLVRKPRKSKTKQSDSPALNRGFNSKKKQFTNLNSPQKRGVCTRVGTMTP. Asp-102 is subject to 3-methylthioaspartic acid. Residues 118-137 are disordered; the sequence is SGVDGRRQGRSLYGTKKPKN.

It belongs to the universal ribosomal protein uS12 family. In terms of assembly, part of the 30S ribosomal subunit. Contacts proteins S8 and S17. May interact with IF1 in the 30S initiation complex.

With S4 and S5 plays an important role in translational accuracy. Functionally, interacts with and stabilizes bases of the 16S rRNA that are involved in tRNA selection in the A site and with the mRNA backbone. Located at the interface of the 30S and 50S subunits, it traverses the body of the 30S subunit contacting proteins on the other side and probably holding the rRNA structure together. The combined cluster of proteins S8, S12 and S17 appears to hold together the shoulder and platform of the 30S subunit. The chain is Small ribosomal subunit protein uS12 from Staphylococcus epidermidis (strain ATCC 35984 / DSM 28319 / BCRC 17069 / CCUG 31568 / BM 3577 / RP62A).